Reading from the N-terminus, the 414-residue chain is Thyroid hormone receptor beta-B (414 aa).

A modulating region spans residues 1 to 59 (MPSSMSVRLFTASAAQRKKIQEGDCCVVLAGKTQGRFILIGAVARVSGYIPSYLDKDEL). 2 NR C4-type zinc fingers span residues 60 to 80 (CVVC…CEGC) and 98 to 122 (CKYE…FKKC). The segment at residues 60 to 134 (CVVCGDKATG…VGMATDLVLD (75 aa)) is a DNA-binding region (nuclear receptor). The NR LBD domain occupies 170–414 (EEWELIQVVT…PPLFLEVFED (245 aa)).

This sequence belongs to the nuclear hormone receptor family. NR1 subfamily.

It localises to the nucleus. High affinity receptor for triiodothyronine (T3). This is Thyroid hormone receptor beta-B (thrb-b) from Xenopus laevis (African clawed frog).